The chain runs to 220 residues: Thiopurine S-methyltransferase (220 aa).

S-adenosyl-L-methionine contacts are provided by tryptophan 14, leucine 49, glutamate 70, and arginine 127.

It belongs to the class I-like SAM-binding methyltransferase superfamily. TPMT family.

It is found in the cytoplasm. It carries out the reaction S-adenosyl-L-methionine + a thiopurine = S-adenosyl-L-homocysteine + a thiopurine S-methylether.. The chain is Thiopurine S-methyltransferase from Gluconobacter oxydans (strain 621H) (Gluconobacter suboxydans).